A 226-amino-acid polypeptide reads, in one-letter code: MAWRSVGANNEDLIRQLKDHGVIASDAVAQAMKETDRKHYSPRNPYMDAPQPIGGGVTISAPHMHAFALEYLRDHLKPGARILDVGSGSGYLTACFYRYIKAKGVDADTRIVGIEHQAELVRRSKANLNTDDRSMLDSGQLLIVEGDGRKGYPPNAPYNAIHVGAAAPDTPTELINQLASGGRLIVPVGPDGGSQYMQQYDKDANGKVEMTRLMGVMYVPLTDLRS.

S-adenosyl-L-homocysteine-binding positions include 57–60 (VTIS), His65, Ser89, 115–116 (EH), 147–148 (DG), and Thr222. Ser60 is an active-site residue.

The protein belongs to the methyltransferase superfamily. L-isoaspartyl/D-aspartyl protein methyltransferase family. In terms of assembly, monomer.

The protein localises to the cytoplasm. It localises to the cytosol. It carries out the reaction [protein]-L-isoaspartate + S-adenosyl-L-methionine = [protein]-L-isoaspartate alpha-methyl ester + S-adenosyl-L-homocysteine. Its function is as follows. Initiates the repair of damaged proteins by catalyzing methyl esterification of L-isoaspartyl and D-aspartyl residues produced by spontaneous isomerization and racemization of L-aspartyl and L-asparaginyl residues in aging peptides and proteins. This Drosophila melanogaster (Fruit fly) protein is Protein-L-isoaspartate(D-aspartate) O-methyltransferase (Pcmt).